The sequence spans 668 residues: Lebercilin-like protein (668 aa).

The segment at 17-44 (SVALENNRRSAECKRSPGTGDFSRNSSA) is disordered. Residues 22–31 (NNRRSAECKR) are compositionally biased toward basic and acidic residues. Coiled-coil stretches lie at residues 148–259 (LHKI…EREE) and 305–336 (AAQT…IKNI). The segment at 351-402 (YPKVSSTKSVQADRKSLPFTSMRHQGTQKSDVPPLTTKGKKATGNMNHKEKS) is disordered. Polar residues predominate over residues 368 to 380 (PFTSMRHQGTQKS). A coiled-coil region spans residues 420–440 (EDSKTKYEDLSREEKHLEVQV). Disordered stretches follow at residues 495-520 (RSMQ…PLRQ), 533-581 (LHHG…FGKS), and 605-668 (SGYV…KIII). The segment covering 546–558 (AGNTKYSHSTSKH) has biased composition (polar residues). Basic and acidic residues-rich tracts occupy residues 560–572 (SNRE…HSDS) and 621–632 (GSEEPLQSKESH). The segment covering 633–660 (PPSQASASNAFGDSKVTVVNSIKPSSPT) has biased composition (polar residues).

This sequence belongs to the LCA5 family.

This chain is Lebercilin-like protein, found in Macaca fascicularis (Crab-eating macaque).